The following is a 476-amino-acid chain: ATP synthase subunit beta, chloroplastic (476 aa).

155–162 (GGAGVGKT) is an ATP binding site.

This sequence belongs to the ATPase alpha/beta chains family. As to quaternary structure, F-type ATPases have 2 components, CF(1) - the catalytic core - and CF(0) - the membrane proton channel. CF(1) has five subunits: alpha(3), beta(3), gamma(1), delta(1), epsilon(1). CF(0) has four main subunits: a(1), b(1), b'(1) and c(9-12).

It is found in the plastid. It localises to the chloroplast thylakoid membrane. It carries out the reaction ATP + H2O + 4 H(+)(in) = ADP + phosphate + 5 H(+)(out). Its function is as follows. Produces ATP from ADP in the presence of a proton gradient across the membrane. The catalytic sites are hosted primarily by the beta subunits. The protein is ATP synthase subunit beta, chloroplastic of Emiliania huxleyi (Coccolithophore).